The sequence spans 587 residues: Aspartate--tRNA ligase (587 aa).

Position 174 (Glu174) interacts with L-aspartate. The segment at 198–201 (QITK) is aspartate. Residue Arg220 participates in L-aspartate binding. ATP contacts are provided by residues 220–222 (RDE) and Gln229. His443 serves as a coordination point for L-aspartate. Glu477 is a binding site for ATP. Residue Arg484 participates in L-aspartate binding. ATP is bound at residue 529–532 (GLDR).

This sequence belongs to the class-II aminoacyl-tRNA synthetase family. Type 1 subfamily. In terms of assembly, homodimer.

The protein localises to the cytoplasm. The enzyme catalyses tRNA(Asp) + L-aspartate + ATP = L-aspartyl-tRNA(Asp) + AMP + diphosphate. In terms of biological role, catalyzes the attachment of L-aspartate to tRNA(Asp) in a two-step reaction: L-aspartate is first activated by ATP to form Asp-AMP and then transferred to the acceptor end of tRNA(Asp). This is Aspartate--tRNA ligase from Streptococcus pneumoniae (strain ATCC 700669 / Spain 23F-1).